The primary structure comprises 106 residues: MNRNILEEMLQYLLIDWIVGDQFEIQLNQQLWSLIPNNDVRRLVSHVIRTLKTDCTETHLQLACAKLISRTGLLMKLLSEQQELRTVSMTAWKPRMNRKSRSRMRS.

The polypeptide is Putative protein LRRC37A5P (LRRC37A5P) (Homo sapiens (Human)).